The sequence spans 180 residues: Interleukin-17B (180 aa).

An N-terminal signal peptide occupies residues 1–20 (MDWPHNLLFLLTISIFLGLG). The interval 22-44 (PRSPKSKRKGQGRPGPLAPGPHQ) is disordered. Asparagine 75 is a glycosylation site (N-linked (GlcNAc...) asparagine). 2 disulfide bridges follow: cysteine 121-cysteine 176 and cysteine 126-cysteine 178.

This sequence belongs to the IL-17 family. As to expression, expressed in adult pancreas, small intestine, stomach, spinal cord and testis. Less pronounced expression in prostate, colon mucosal lining, and ovary.

Its subcellular location is the secreted. Functionally, stimulates the release of tumor necrosis factor alpha and IL-1-beta from the monocytic cell line THP-1. The sequence is that of Interleukin-17B (IL17B) from Homo sapiens (Human).